A 439-amino-acid polypeptide reads, in one-letter code: Methylenetetrahydrofolate--tRNA-(uracil-5-)-methyltransferase TrmFO (439 aa).

8–13 (GGGLAG) lines the FAD pocket.

This sequence belongs to the MnmG family. TrmFO subfamily. FAD serves as cofactor.

The protein resides in the cytoplasm. The catalysed reaction is uridine(54) in tRNA + (6R)-5,10-methylene-5,6,7,8-tetrahydrofolate + NADH + H(+) = 5-methyluridine(54) in tRNA + (6S)-5,6,7,8-tetrahydrofolate + NAD(+). It catalyses the reaction uridine(54) in tRNA + (6R)-5,10-methylene-5,6,7,8-tetrahydrofolate + NADPH + H(+) = 5-methyluridine(54) in tRNA + (6S)-5,6,7,8-tetrahydrofolate + NADP(+). Catalyzes the folate-dependent formation of 5-methyl-uridine at position 54 (M-5-U54) in all tRNAs. The sequence is that of Methylenetetrahydrofolate--tRNA-(uracil-5-)-methyltransferase TrmFO from Dictyoglomus thermophilum (strain ATCC 35947 / DSM 3960 / H-6-12).